We begin with the raw amino-acid sequence, 659 residues long: Exoribonuclease 2 (659 aa).

Positions 189–531 (RENLTALHFV…NHRLIKAVLA (343 aa)) constitute an RNB domain. In terms of domain architecture, S1 motif spans 576 to 658 (NVEFNAEVQD…ATRSIVGEIL (83 aa)).

It belongs to the RNR ribonuclease family. RNase II subfamily.

It is found in the cytoplasm. The enzyme catalyses Exonucleolytic cleavage in the 3'- to 5'-direction to yield nucleoside 5'-phosphates.. In terms of biological role, involved in mRNA degradation. Hydrolyzes single-stranded polyribonucleotides processively in the 3' to 5' direction. The sequence is that of Exoribonuclease 2 from Haemophilus influenzae (strain 86-028NP).